A 314-amino-acid chain; its full sequence is Homoserine O-acetyltransferase (314 aa).

The active-site Acyl-thioester intermediate is C142. Residues K163 and S192 each coordinate substrate. H235 serves as the catalytic Proton acceptor. E237 is an active-site residue. R249 is a substrate binding site.

It belongs to the MetA family.

Its subcellular location is the cytoplasm. It catalyses the reaction L-homoserine + acetyl-CoA = O-acetyl-L-homoserine + CoA. The protein operates within amino-acid biosynthesis; L-methionine biosynthesis via de novo pathway; O-acetyl-L-homoserine from L-homoserine: step 1/1. Its function is as follows. Transfers an acetyl group from acetyl-CoA to L-homoserine, forming acetyl-L-homoserine. The protein is Homoserine O-acetyltransferase of Streptococcus mutans serotype c (strain ATCC 700610 / UA159).